Here is a 267-residue protein sequence, read N- to C-terminus: Tryptophan synthase alpha chain (267 aa).

Active-site proton acceptor residues include Glu-49 and Asp-60.

Belongs to the TrpA family. As to quaternary structure, tetramer of two alpha and two beta chains.

The enzyme catalyses (1S,2R)-1-C-(indol-3-yl)glycerol 3-phosphate + L-serine = D-glyceraldehyde 3-phosphate + L-tryptophan + H2O. It functions in the pathway amino-acid biosynthesis; L-tryptophan biosynthesis; L-tryptophan from chorismate: step 5/5. Functionally, the alpha subunit is responsible for the aldol cleavage of indoleglycerol phosphate to indole and glyceraldehyde 3-phosphate. This chain is Tryptophan synthase alpha chain, found in Acinetobacter baylyi (strain ATCC 33305 / BD413 / ADP1).